We begin with the raw amino-acid sequence, 231 residues long: MAKVSKRMKEISAKINAEKKYPVSEAFDLLREVSSVKFVESVDVSVALGVDPRKSDQVVRGASVLPNGTGKTVRVAVFAKGPAADAAKEAGAEVVGMEDLADEVKKGNMDFDVVIASPDSMRVVGQLGQILGPKGLMPNPKVGTVTMDVAKAVRDAKAGQVRYRVDKAGIIHTTIGKVNFTSDALKQNLEQLLTDLKKAKPAVSKGIYLKKVSVSSTMGPGINVDFSDLNI.

Belongs to the universal ribosomal protein uL1 family. As to quaternary structure, part of the 50S ribosomal subunit.

Functionally, binds directly to 23S rRNA. The L1 stalk is quite mobile in the ribosome, and is involved in E site tRNA release. In terms of biological role, protein L1 is also a translational repressor protein, it controls the translation of the L11 operon by binding to its mRNA. The chain is Large ribosomal subunit protein uL1 from Francisella tularensis subsp. tularensis (strain FSC 198).